Consider the following 164-residue polypeptide: Putative histone H2B type 2-D (164 aa).

Residues 1–12 (MPEPAKFAPAPK) show a composition bias toward low complexity. The segment at 1–33 (MPEPAKFAPAPKKGSKKAVTKAQKKDGKKRKRS) is disordered. Residue P2 is modified to N-acetylproline. Position 6 is an N6-(2-hydroxyisobutyryl)lysine; alternate (K6). Residues K6 and K12 each carry the N6-(beta-hydroxybutyryl)lysine; alternate modification. N6-acetyllysine; alternate occurs at positions 6, 12, and 13. Position 6 is an N6-butyryllysine; alternate (K6). Residues K6, K12, and K13 each carry the N6-crotonyllysine; alternate modification. K6 and K12 each carry N6-lactoyllysine; alternate. K6 is covalently cross-linked (Glycyl lysine isopeptide (Lys-Gly) (interchain with G-Cter in SUMO2); alternate). K13 is modified (N6-(2-hydroxyisobutyryl)lysine; alternate). Phosphoserine; by STK4/MST1 is present on S15. An N6-acetyllysine; alternate mark is found at K16, K17, K21, and K24. N6-crotonyllysine; alternate occurs at positions 16, 17, 21, and 24. N6-lactoyllysine; alternate is present on residues K16, K17, K21, and K24. N6-(beta-hydroxybutyryl)lysine; alternate occurs at positions 17 and 21. At K17 the chain carries N6-glutaryllysine; alternate. An N6-(2-hydroxyisobutyryl)lysine; alternate mark is found at K21 and K24. K21 bears the N6-butyryllysine; alternate mark. A Glycyl lysine isopeptide (Lys-Gly) (interchain with G-Cter in SUMO2); alternate cross-link involves residue K21. The residue at position 25 (K25) is an N6-(2-hydroxyisobutyryl)lysine. K35 bears the N6-(2-hydroxyisobutyryl)lysine; alternate mark. At K35 the chain carries N6-(beta-hydroxybutyryl)lysine; alternate. Residue K35 is modified to N6-crotonyllysine; alternate. At K35 the chain carries N6-glutaryllysine; alternate. K35 is modified (N6-succinyllysine; alternate). K35 is covalently cross-linked (Glycyl lysine isopeptide (Lys-Gly) (interchain with G-Cter in ubiquitin); alternate). At S37 the chain carries Phosphoserine; by AMPK. 3 positions are modified to N6-(2-hydroxyisobutyryl)lysine; alternate: K44, K47, and K58. K44 carries the post-translational modification N6-lactoyllysine; alternate. N6-glutaryllysine; alternate occurs at positions 44 and 47. K47 carries the N6-methyllysine; alternate modification. At K58 the chain carries N6,N6-dimethyllysine; alternate. R80 is modified (dimethylated arginine). At K86 the chain carries N6-(2-hydroxyisobutyryl)lysine; alternate. K86 is modified (N6-(beta-hydroxybutyryl)lysine; alternate). N6-acetyllysine; alternate is present on K86. Position 86 is an N6-lactoyllysine; alternate (K86). K86 carries the N6,N6,N6-trimethyllysine; alternate modification. Omega-N-methylarginine occurs at positions 87 and 93. Residues 111–140 (PCPRAPRRSPSTPAPSESLPGPGARSLPPS) form a disordered region.

It belongs to the histone H2B family. The nucleosome is a histone octamer containing two molecules each of H2A, H2B, H3 and H4 assembled in one H3-H4 heterotetramer and two H2A-H2B heterodimers. The octamer wraps approximately 147 bp of DNA. Post-translationally, phosphorylation at Ser-37 (H2BS36ph) by AMPK in response to stress promotes transcription. Phosphorylated on Ser-15 (H2BS14ph) by STK4/MST1 during apoptosis; which facilitates apoptotic chromatin condensation. Also phosphorylated on Ser-15 in response to DNA double strand breaks (DSBs), and in correlation with somatic hypermutation and immunoglobulin class-switch recombination. In terms of processing, crotonylation (Kcr) is specifically present in male germ cells and marks testis-specific genes in post-meiotic cells, including X-linked genes that escape sex chromosome inactivation in haploid cells. Crotonylation marks active promoters and enhancers and confers resistance to transcriptional repressors. It is also associated with post-meiotically activated genes on autosomes. Lactylated in macrophages by EP300/P300 by using lactoyl-CoA directly derived from endogenous or exogenous lactate, leading to stimulates gene transcription.

The protein resides in the nucleus. It is found in the chromosome. Its function is as follows. Core component of nucleosome. Nucleosomes wrap and compact DNA into chromatin, limiting DNA accessibility to the cellular machineries which require DNA as a template. Histones thereby play a central role in transcription regulation, DNA repair, DNA replication and chromosomal stability. DNA accessibility is regulated via a complex set of post-translational modifications of histones, also called histone code, and nucleosome remodeling. The chain is Putative histone H2B type 2-D from Homo sapiens (Human).